The sequence spans 207 residues: NAD--protein ADP-ribosyltransferase modB (207 aa).

Residue R73 participates in NAD(+) binding. E173 is an active-site residue.

The protein belongs to the Tevenvirinae NAD--protein ADP-ribosyltransferase modA family.

The protein resides in the virion. It catalyses the reaction L-arginyl-[protein] + NAD(+) = N(omega)-(ADP-D-ribosyl)-L-arginyl-[protein] + nicotinamide + H(+). ADP-ribosyltransferase that regulates transcription by ADP-ribosylation of host ribosomal protein S1. Additional identified targets include proteins involved in either translation or cellular metabolism such as elongation factor-Tu or trigger factor. Also reprograms the host's gene-expression system by RNAylating host ribosomal protein S1. ModB can attach NAD-capped RNAs to target proteins post-transcriptionally resulting in covalent RNA-protein conjugates. The sequence is that of NAD--protein ADP-ribosyltransferase modB from Enterobacteria phage T4 (Bacteriophage T4).